The following is a 375-amino-acid chain: Sulfite efflux pump SSU1 (375 aa).

Residues 1–25 (MPSGSGFHNIEEAGEKARKRDDWIA) are Cytoplasmic-facing. A helical membrane pass occupies residues 26–46 (ISNFHPGWFSVNMGTGITAIL). The Extracellular portion of the chain corresponds to 47-59 (LQNLPYQFPGLHY). The helical transmembrane segment at 60–80 (IAVVLFILNVIIFFLFLTISI) threads the bilayer. The Cytoplasmic segment spans residues 81–101 (TRYCLWPDKFKAMLAHPAHSM). A helical transmembrane segment spans residues 102-122 (LLGTFPMGFATIINCIVFICV). Over 123–135 (PVWGEWASRFAWG) the chain is Extracellular. Residues 136–156 (LWWIDAAVSVAICYFVPFMLM) traverse the membrane as a helical segment. The Cytoplasmic segment spans residues 157–167 (TKHTSSLETMT). A helical membrane pass occupies residues 168 to 188 (AAWLLPIVAPVVAAASGGVVA). The Extracellular portion of the chain corresponds to 189 to 200 (DSLQNDTHALIT). N-linked (GlcNAc...) asparagine glycosylation occurs at asparagine 193. The helical transmembrane segment at 201 to 221 (ILVCYAMWGSAVPLAMVILVI) threads the bilayer. The Cytoplasmic segment spans residues 222 to 234 (YFQRLAIHKLVPR). The helical transmembrane segment at 235 to 255 (AAIVSALLPIGPLGQGGFGLM) threads the bilayer. Residues 256-277 (QLGVVAKRVFPRLDFLAPIAGD) lie on the Extracellular side of the membrane. The chain crosses the membrane as a helical span at residues 278 to 298 (IFYVMGAFIAMIMWGFGLIWL). Residues 299–309 (WFALASFTRGK) lie on the Cytoplasmic side of the membrane. The chain crosses the membrane as a helical span at residues 310–330 (FYFNIGWWAFTFPLGVFTTAT). Over 331 to 343 (TQMGKEFNSPFFD) the chain is Extracellular. Residues 344-364 (ILGTFFSIVVTCMWVLVFALT) form a helical membrane-spanning segment. The Cytoplasmic segment spans residues 365-375 (VYKSCTKELFR).

The protein belongs to the tellurite-resistance/dicarboxylate transporter (TDT) family.

The protein localises to the cell membrane. Sulphite efflux pump required for the secretion of sulphite as a reducing agent. In the presence of sulphite, cystine in keratin is directly cleaved to cysteine and S-sulphocysteine, and thereby, reduced proteins become accessible to hydrolysis by a variety of secreted endo- and exoproteases. Excretion of sulphite mediated by an efflux pump also represents a detoxification pathway for dermatophytes during infection of the epidermal stratum corneum, hair and nails, which are rich in cysteine. This is Sulfite efflux pump SSU1 (SSU1) from Trichophyton rubrum (Athlete's foot fungus).